A 439-amino-acid chain; its full sequence is Protein translocase subunit SecY (439 aa).

10 consecutive transmembrane segments (helical) span residues 28–48 (ILITVGLLILCRLGIFIPVPG), 73–93 (IFSGGGLSALGVFALGILPYI), 127–147 (LTRYVSLGWALLQSIVIAVWV), 156–176 (PLFTIQTALALVAGSMFVMWI), 179–199 (LITERGIGNGASLLIFLNIVA), 220–240 (VGGIVILLIVFLATIVGIVFV), 276–296 (GVMPIIFASAILVLPFSLANF), 318–338 (IYALFYLVLIVAFSYFYSSLI), 375–395 (LTILGAVFLGLVAIIPTAVEG), and 401–421 (TFQGFGATSLLILVGVAIDTA).

The protein belongs to the SecY/SEC61-alpha family. In terms of assembly, component of the Sec protein translocase complex. Heterotrimer consisting of SecY, SecE and SecG subunits. The heterotrimers can form oligomers, although 1 heterotrimer is thought to be able to translocate proteins. Interacts with the ribosome. Interacts with SecDF, and other proteins may be involved. Interacts with SecA.

It localises to the cell inner membrane. The protein localises to the cellular thylakoid membrane. Its function is as follows. The central subunit of the protein translocation channel SecYEG. Consists of two halves formed by TMs 1-5 and 6-10. These two domains form a lateral gate at the front which open onto the bilayer between TMs 2 and 7, and are clamped together by SecE at the back. The channel is closed by both a pore ring composed of hydrophobic SecY resides and a short helix (helix 2A) on the extracellular side of the membrane which forms a plug. The plug probably moves laterally to allow the channel to open. The ring and the pore may move independently. The polypeptide is Protein translocase subunit SecY (Synechococcus elongatus (strain ATCC 33912 / PCC 7942 / FACHB-805) (Anacystis nidulans R2)).